We begin with the raw amino-acid sequence, 567 residues long: Phosphoglucomutase-like protein 5 (567 aa).

Positions 1–26 (MEGSPIPVLTVPTAPYEDQRPTGGGG) are disordered. The residue at position 120 (Thr120) is a Phosphothreonine. Position 122 is a phosphoserine (Ser122).

Belongs to the phosphohexose mutase family. As to quaternary structure, interacts with DMD/dystrophin; the interaction is direct. Interacts with UTRN/utrophin.

It localises to the cell junction. The protein localises to the adherens junction. The protein resides in the cytoplasm. It is found in the cytoskeleton. Its subcellular location is the cell membrane. It localises to the sarcolemma. In terms of biological role, component of adherens-type cell-cell and cell-matrix junctions. Has no phosphoglucomutase activity in vitro. This Rattus norvegicus (Rat) protein is Phosphoglucomutase-like protein 5.